The following is a 121-amino-acid chain: Peptidyl-tRNA hydrolase (121 aa).

The protein belongs to the PTH2 family.

The protein resides in the cytoplasm. The enzyme catalyses an N-acyl-L-alpha-aminoacyl-tRNA + H2O = an N-acyl-L-amino acid + a tRNA + H(+). In terms of biological role, the natural substrate for this enzyme may be peptidyl-tRNAs which drop off the ribosome during protein synthesis. The chain is Peptidyl-tRNA hydrolase from Sulfurisphaera tokodaii (strain DSM 16993 / JCM 10545 / NBRC 100140 / 7) (Sulfolobus tokodaii).